A 377-amino-acid chain; its full sequence is Protein RecA (377 aa).

Gly65–Thr72 contacts ATP. The disordered stretch occupies residues Gly329–Lys377. A compositionally biased stretch (basic and acidic residues) spans Thr339–Ala361.

Belongs to the RecA family.

The protein resides in the cytoplasm. Can catalyze the hydrolysis of ATP in the presence of single-stranded DNA, the ATP-dependent uptake of single-stranded DNA by duplex DNA, and the ATP-dependent hybridization of homologous single-stranded DNAs. It interacts with LexA causing its activation and leading to its autocatalytic cleavage. In Levilactobacillus brevis (strain ATCC 367 / BCRC 12310 / CIP 105137 / JCM 1170 / LMG 11437 / NCIMB 947 / NCTC 947) (Lactobacillus brevis), this protein is Protein RecA.